Consider the following 102-residue polypeptide: NADH-quinone oxidoreductase subunit K (102 aa).

3 helical membrane-spanning segments follow: residues 2-22 (LDFYILVALILFFIGVLGVIL), 26-46 (IFTIFMSVELMLNATALIFAT), and 58-78 (VIVMLIIAIAAAEASFGLALI).

The protein belongs to the complex I subunit 4L family. NDH-1 is composed of 14 different subunits. Subunits NuoA, H, J, K, L, M, N constitute the membrane sector of the complex.

Its subcellular location is the cell inner membrane. The enzyme catalyses a quinone + NADH + 5 H(+)(in) = a quinol + NAD(+) + 4 H(+)(out). In terms of biological role, NDH-1 shuttles electrons from NADH, via FMN and iron-sulfur (Fe-S) centers, to quinones in the respiratory chain. The immediate electron acceptor for the enzyme in this species is believed to be ubiquinone. Couples the redox reaction to proton translocation (for every two electrons transferred, four hydrogen ions are translocated across the cytoplasmic membrane), and thus conserves the redox energy in a proton gradient. This Campylobacter fetus subsp. fetus (strain 82-40) protein is NADH-quinone oxidoreductase subunit K.